Here is a 321-residue protein sequence, read N- to C-terminus: Probable arabinan endo-1,5-alpha-L-arabinosidase C (321 aa).

The first 18 residues, Met-1–Ala-18, serve as a signal peptide directing secretion. The active-site Proton acceptor is the Asp-33. Asn-192 carries N-linked (GlcNAc...) asparagine glycosylation. Glu-200 serves as the catalytic Proton donor. N-linked (GlcNAc...) asparagine glycosylation occurs at Asn-224.

The protein belongs to the glycosyl hydrolase 43 family.

The protein localises to the secreted. It carries out the reaction Endohydrolysis of (1-&gt;5)-alpha-arabinofuranosidic linkages in (1-&gt;5)-arabinans.. The protein operates within glycan metabolism; L-arabinan degradation. In terms of biological role, endo-1,5-alpha-L-arabinanase involved in degradation of pectin. Its preferred substrate is linear 1,5-alpha-L-arabinan. The chain is Probable arabinan endo-1,5-alpha-L-arabinosidase C (abnC) from Aspergillus fumigatus (strain ATCC MYA-4609 / CBS 101355 / FGSC A1100 / Af293) (Neosartorya fumigata).